The chain runs to 294 residues: 4-hydroxy-tetrahydrodipicolinate synthase (294 aa).

Thr-45 contacts pyruvate. Residue Tyr-133 is the Proton donor/acceptor of the active site. The active-site Schiff-base intermediate with substrate is Lys-161. A pyruvate-binding site is contributed by Ile-203.

This sequence belongs to the DapA family. In terms of assembly, homotetramer; dimer of dimers.

Its subcellular location is the cytoplasm. The enzyme catalyses L-aspartate 4-semialdehyde + pyruvate = (2S,4S)-4-hydroxy-2,3,4,5-tetrahydrodipicolinate + H2O + H(+). The protein operates within amino-acid biosynthesis; L-lysine biosynthesis via DAP pathway; (S)-tetrahydrodipicolinate from L-aspartate: step 3/4. Catalyzes the condensation of (S)-aspartate-beta-semialdehyde [(S)-ASA] and pyruvate to 4-hydroxy-tetrahydrodipicolinate (HTPA). In Shewanella sp. (strain ANA-3), this protein is 4-hydroxy-tetrahydrodipicolinate synthase.